The primary structure comprises 68 residues: Conotoxin Lt5.2 (68 aa).

The signal sequence occupies residues 1–19 (MLCLPVFIILLLLASPAAP). The propeptide occupies 20-54 (KSLETRIQNDLIRAGLTDADLKTEKGFLSGLLNVA).

Belongs to the conotoxin T superfamily. In terms of processing, contains 2 disulfide bonds that can be either 'C1-C3, C2-C4' or 'C1-C4, C2-C3', since these disulfide connectivities have been observed for conotoxins with cysteine framework V (for examples, see AC P0DQQ7 and AC P81755). In terms of tissue distribution, expressed by the venom duct.

The protein resides in the secreted. The sequence is that of Conotoxin Lt5.2 from Conus litteratus (Lettered cone).